The chain runs to 336 residues: Holliday junction branch migration complex subunit RuvB (336 aa).

Residues 4 to 185 are large ATPase domain (RuvB-L); the sequence is MDERLLSGES…FGVLSRLEYY (182 aa). ATP-binding positions include leucine 24, arginine 25, glycine 66, lysine 69, threonine 70, threonine 71, 132–134, arginine 175, tyrosine 185, and arginine 222; that span reads EDF. Residue threonine 70 participates in Mg(2+) binding. Residues 186–256 are small ATPAse domain (RuvB-S); sequence TVDQLSAIVE…ITQMALELLQ (71 aa). The head domain (RuvB-H) stretch occupies residues 259–336; sequence KLGLDHIDHK…EHFGMEMPKV (78 aa). The DNA site is built by arginine 314 and arginine 319.

It belongs to the RuvB family. Homohexamer. Forms an RuvA(8)-RuvB(12)-Holliday junction (HJ) complex. HJ DNA is sandwiched between 2 RuvA tetramers; dsDNA enters through RuvA and exits via RuvB. An RuvB hexamer assembles on each DNA strand where it exits the tetramer. Each RuvB hexamer is contacted by two RuvA subunits (via domain III) on 2 adjacent RuvB subunits; this complex drives branch migration. In the full resolvosome a probable DNA-RuvA(4)-RuvB(12)-RuvC(2) complex forms which resolves the HJ.

It is found in the cytoplasm. It catalyses the reaction ATP + H2O = ADP + phosphate + H(+). Functionally, the RuvA-RuvB-RuvC complex processes Holliday junction (HJ) DNA during genetic recombination and DNA repair, while the RuvA-RuvB complex plays an important role in the rescue of blocked DNA replication forks via replication fork reversal (RFR). RuvA specifically binds to HJ cruciform DNA, conferring on it an open structure. The RuvB hexamer acts as an ATP-dependent pump, pulling dsDNA into and through the RuvAB complex. RuvB forms 2 homohexamers on either side of HJ DNA bound by 1 or 2 RuvA tetramers; 4 subunits per hexamer contact DNA at a time. Coordinated motions by a converter formed by DNA-disengaged RuvB subunits stimulates ATP hydrolysis and nucleotide exchange. Immobilization of the converter enables RuvB to convert the ATP-contained energy into a lever motion, pulling 2 nucleotides of DNA out of the RuvA tetramer per ATP hydrolyzed, thus driving DNA branch migration. The RuvB motors rotate together with the DNA substrate, which together with the progressing nucleotide cycle form the mechanistic basis for DNA recombination by continuous HJ branch migration. Branch migration allows RuvC to scan DNA until it finds its consensus sequence, where it cleaves and resolves cruciform DNA. This chain is Holliday junction branch migration complex subunit RuvB, found in Bacillus thuringiensis (strain Al Hakam).